A 1423-amino-acid chain; its full sequence is Protein phosphatase Slingshot homolog 2 (1423 aa).

The segment at Met-1–Ile-37 is disordered. The segment covering Ser-9 to Pro-18 has biased composition (low complexity). Phosphoserine occurs at positions 17, 25, and 36. Residues Glu-248–Gly-303 form the DEK-C domain. Residues Ser-307–Ala-448 form the Tyrosine-protein phosphatase domain. The active-site Phosphocysteine intermediate is Cys-392. Ser-461, Ser-487, Ser-534, Ser-631, and Ser-633 each carry phosphoserine. Disordered regions lie at residues Thr-617 to Glu-641, Gln-664 to Asn-684, Pro-696 to Ala-728, Glu-797 to Pro-825, Glu-840 to Tyr-862, Leu-877 to Val-954, Phe-962 to Glu-981, Thr-1019 to Leu-1041, Ser-1070 to Ser-1108, and Thr-1144 to Ser-1179. Over residues Lys-621–Gln-635 the composition is skewed to pro residues. Basic and acidic residues predominate over residues Gln-664 to Gly-680. Positions Thr-889–Ser-904 are enriched in polar residues. The span at Pro-910–Lys-932 shows a compositional bias: basic and acidic residues. Polar residues predominate over residues Glu-941 to Thr-953. Over residues Thr-1019–Glu-1034 the composition is skewed to polar residues. Over residues Thr-1144 to Ser-1172 the composition is skewed to polar residues. A Phosphoserine modification is found at Ser-1217. At Thr-1422 the chain carries Phosphothreonine.

The protein belongs to the protein-tyrosine phosphatase family. As to quaternary structure, interacts with filamentous actin.

The protein localises to the cytoplasm. Its subcellular location is the cytoskeleton. The protein resides in the cell junction. It is found in the focal adhesion. It localises to the cytoplasmic vesicle. The protein localises to the secretory vesicle. Its subcellular location is the acrosome. The enzyme catalyses O-phospho-L-tyrosyl-[protein] + H2O = L-tyrosyl-[protein] + phosphate. It catalyses the reaction O-phospho-L-seryl-[protein] + H2O = L-seryl-[protein] + phosphate. The catalysed reaction is O-phospho-L-threonyl-[protein] + H2O = L-threonyl-[protein] + phosphate. Protein phosphatase which regulates actin filament dynamics. Dephosphorylates and activates the actin binding/depolymerizing factor cofilin, which subsequently binds to actin filaments and stimulates their disassembly. Inhibitory phosphorylation of cofilin is mediated by LIMK1, which may also be dephosphorylated and inactivated by this protein. Required for spermatogenesis. Involved in acrosome biogenesis, probably by regulating cofilin-mediated actin cytoskeleton remodeling during proacrosomal vesicle fusion and/or Golgi to perinuclear vesicle trafficking. This chain is Protein phosphatase Slingshot homolog 2 (SSH2), found in Homo sapiens (Human).